The sequence spans 163 residues: ATP synthase subunit b, sodium ion specific (163 aa).

Residues 9–29 traverse the membrane as a helical segment; the sequence is VSIDINMFWQIINFLILMFFF.

Belongs to the ATPase B chain family. F-type ATPases have 2 components, F(1) - the catalytic core - and F(0) - the membrane proton channel. F(1) has five subunits: alpha(3), beta(3), gamma(1), delta(1), epsilon(1). F(0) has three main subunits: a(1), b(2) and c(10-14). The alpha and beta chains form an alternating ring which encloses part of the gamma chain. F(1) is attached to F(0) by a central stalk formed by the gamma and epsilon chains, while a peripheral stalk is formed by the delta and b chains.

The protein localises to the cell inner membrane. Its function is as follows. F(1)F(0) ATP synthase produces ATP from ADP in the presence of a proton or sodium gradient. F-type ATPases consist of two structural domains, F(1) containing the extramembraneous catalytic core and F(0) containing the membrane proton channel, linked together by a central stalk and a peripheral stalk. During catalysis, ATP synthesis in the catalytic domain of F(1) is coupled via a rotary mechanism of the central stalk subunits to proton translocation. In terms of biological role, component of the F(0) channel, it forms part of the peripheral stalk, linking F(1) to F(0). The polypeptide is ATP synthase subunit b, sodium ion specific (atpF) (Ilyobacter tartaricus).